The sequence spans 257 residues: Type III pantothenate kinase (257 aa).

6-13 is an ATP binding site; the sequence is DCGNTNTV. Residue 107–110 coordinates substrate; sequence GPDR. Residue Asp109 is the Proton acceptor of the active site. K(+) is bound at residue Asp129. Thr132 contacts ATP. Substrate is bound at residue Thr184.

This sequence belongs to the type III pantothenate kinase family. In terms of assembly, homodimer. NH4(+) is required as a cofactor. The cofactor is K(+).

The protein localises to the cytoplasm. It catalyses the reaction (R)-pantothenate + ATP = (R)-4'-phosphopantothenate + ADP + H(+). It functions in the pathway cofactor biosynthesis; coenzyme A biosynthesis; CoA from (R)-pantothenate: step 1/5. Catalyzes the phosphorylation of pantothenate (Pan), the first step in CoA biosynthesis. In Cereibacter sphaeroides (strain ATCC 17029 / ATH 2.4.9) (Rhodobacter sphaeroides), this protein is Type III pantothenate kinase.